The primary structure comprises 546 residues: MEKIKYLKSIQISQRSVLDLKLLAVGAFTPLDRFMGEEDYRNVVESMRLKSGTLFPIPITLPMEKEIAKDLKEGEWIVLRDPKNVPLAIMRVEEVYKWNLEYEAKNVLGTTDPRHPLVAEMHTWGEYYISGELKVIQLPKYYDFPEYRKTPKQVREEIKSLGLDKIVAFQTRNPMHRVHEELTKRAMEKVGGGLLLHPVVGLTKPGDVDVYTRMRIYKVLYEKYYDKKKTILAFLPLAMRMAGPREALWHGIIRRNYGATHFIVGRDHASPGKDSKGKPFYDPYEAQELFKKYEDEIGIKMVPFEELVYVPELDQYVEINEAKKRNLKYINISGTEIRENFLKQGRKLPEWFTRPEVAEILAETYVPKHKQGFCVWLTGLPCAGKSTIAEILATMLQARGRKVTLLDGDVVRTHLSRGLGFSKEDRITNILRVGFVASEIVKHNGVVICALVSPYRSARNQVRNMMEEGKFIEVFVDAPVEVCEERDVKGLYKKAKEGLIKGFTGVDDPYEPPVAPEVRVDTTKLTPEESALKILEFLKKEGFIKD.

The tract at residues 1 to 370 (MEKIKYLKSI…LAETYVPKHK (370 aa)) is sulfate adenylyltransferase. Positions 371 to 546 (QGFCVWLTGL…FLKKEGFIKD (176 aa)) are adenylsulfate kinase. An ATP-binding site is contributed by 379–386 (GLPCAGKS). The Phosphoserine intermediate role is filled by Ser453.

This sequence in the N-terminal section; belongs to the sulfate adenylyltransferase family. The protein in the C-terminal section; belongs to the APS kinase family.

It catalyses the reaction sulfate + ATP + H(+) = adenosine 5'-phosphosulfate + diphosphate. The enzyme catalyses adenosine 5'-phosphosulfate + ATP = 3'-phosphoadenylyl sulfate + ADP + H(+). The protein operates within sulfur metabolism; hydrogen sulfide biosynthesis; sulfite from sulfate: step 1/3. Its pathway is sulfur metabolism; hydrogen sulfide biosynthesis; sulfite from sulfate: step 2/3. The protein is Probable bifunctional SAT/APS kinase (sat/cysC) of Aquifex aeolicus (strain VF5).